Consider the following 335-residue polypeptide: Methionine import ATP-binding protein MetN 1 (335 aa).

One can recognise an ABC transporter domain in the interval 2 to 242 (IEFHNVHKTY…PQHPTTRRFV (241 aa)). 38-45 (GHSGAGKS) contributes to the ATP binding site.

This sequence belongs to the ABC transporter superfamily. Methionine importer (TC 3.A.1.24) family. As to quaternary structure, the complex is composed of two ATP-binding proteins (MetN), two transmembrane proteins (MetI) and a solute-binding protein (MetQ).

The protein resides in the cell inner membrane. The catalysed reaction is L-methionine(out) + ATP + H2O = L-methionine(in) + ADP + phosphate + H(+). It carries out the reaction D-methionine(out) + ATP + H2O = D-methionine(in) + ADP + phosphate + H(+). Part of the ABC transporter complex MetNIQ involved in methionine import. Responsible for energy coupling to the transport system. This Pseudomonas savastanoi pv. phaseolicola (strain 1448A / Race 6) (Pseudomonas syringae pv. phaseolicola (strain 1448A / Race 6)) protein is Methionine import ATP-binding protein MetN 1.